A 35-amino-acid polypeptide reads, in one-letter code: Alpha-amanitin proprotein (35 aa).

A propeptide spanning residues methionine 1 to proline 10 is cleaved from the precursor. Isoleucine 11 bears the (3R,4R)-4,5-dihydroxyisoleucine; in form alpha-amanitin mark. A (3R,4S)-4-hydroxyisoleucine; in form gamma-amanitin modification is found at isoleucine 11. The segment at residues isoleucine 11–proline 18 is a cross-link (cyclopeptide (Ile-Pro)). A cross-link (2'-cysteinyl-6'-hydroxytryptophan sulfoxide (Trp-Cys)) is located at residues tryptophan 12–cysteine 16. Proline 18 bears the 4-hydroxyproline mark. Residues cysteine 19–cysteine 35 constitute a propeptide that is removed on maturation.

It belongs to the MSDIN fungal toxin family. Processed by the macrocyclase-peptidase enzyme POPB to yield a toxic cyclic decapeptide. POPB first removes 10 residues from the N-terminus. Conformational trapping of the remaining peptide forces the enzyme to release this intermediate rather than proceed to macrocyclization. The enzyme rebinds the remaining peptide in a different conformation and catalyzes macrocyclization of the N-terminal 8 residues.

Functionally, major toxin belonging to the bicyclic octapeptides amatoxins that acts by binding non-competitively to RNA polymerase II and greatly slowing the elongation of transcripts from target promoters. The chain is Alpha-amanitin proprotein from Amanita bisporigera (Destroying angel).